We begin with the raw amino-acid sequence, 261 residues long: Phosphate import ATP-binding protein PstB (261 aa).

Residues 15–256 enclose the ABC transporter domain; that stretch reads LQVRRLNFYY…PAHQETENYI (242 aa). 47–54 provides a ligand contact to ATP; the sequence is GPSGCGKS.

Belongs to the ABC transporter superfamily. Phosphate importer (TC 3.A.1.7) family. In terms of assembly, the complex is composed of two ATP-binding proteins (PstB), two transmembrane proteins (PstC and PstA) and a solute-binding protein (PstS).

It localises to the cell inner membrane. The enzyme catalyses phosphate(out) + ATP + H2O = ADP + 2 phosphate(in) + H(+). Part of the ABC transporter complex PstSACB involved in phosphate import. Responsible for energy coupling to the transport system. This Burkholderia sp protein is Phosphate import ATP-binding protein PstB.